The sequence spans 795 residues: MKDFLRLELPVLPLRNTVVLPHTTTGVDVGRLKSKRAVEEALSADRLLFLVTQKDPEVDDPAPEDLYAVGTLAVVKQAMRLPDGTLQVMVEARSRARLLSYVAAPYLRAVGEAIPEPPLKDPELARVLVNEVQEAFERYLQNHKTLRLDRYQQEAVKSTRDPAILADLVAHHATWTLEEKQTILETPEVEERLKRVLALLLRDLERFELDKKIAARVKEQMDQNQREYYLREQMKAIQKELGGGEDFLTEIEELRERIEKKGMPEPVKEKALKELKRLERMQPGSPEATVSRTYLDWLLEVPWTEADPEVLDISVTKRVLDEDHYGLKEVKERILEYLAVRQLTQGKEVKGHAPILCFVGPPGVGKTSLGKSIARSMNRRFHRISLGGVRDEAEIRGHRRTYIGALPGKIIQGMKQVGVVNPVFLLDEIDKLSSDWRGDPAAALLEVLDPEQNHTFTDHYLDVPYDLSKVFFITTANTLSTIPRPLLDRMEVIEIPGYTLHEKRAIARYFRWPFQVKEAGLEGRLEITDRAIERIVQEYTREAGVRNLDRELSKVARKAAKDYLEKPWEGVRVVDAEDLEAYLGVPKYRPDRAEKEPQVGAAQGLAWTPYGGTLLTIEAVAVPGTGKVNLTGNLGEVMKESAHAALTYLRAHREEWGLPEGFHKDYDLHIHVPEGATPKDGPSAGITIATALASALTGRPVRMDIAMTGEITLRGRVLPIGGVKEKLLAAHQAGIHRVILPKENAAELKEVPEEILKDLEIHFVEEVGEVLKLLLLPPPPPPAVQPDRPQPGVGA.

In terms of domain architecture, Lon N-terminal spans 9–204; that stretch reads LPVLPLRNTV…RVLALLLRDL (196 aa). 360 to 367 is a binding site for ATP; sequence GPPGVGKT. A Lon proteolytic domain is found at 596–777; sequence EPQVGAAQGL…GEVLKLLLLP (182 aa). Residues Ser683 and Lys726 contribute to the active site.

It belongs to the peptidase S16 family. As to quaternary structure, homohexamer. Organized in a ring with a central cavity.

It is found in the cytoplasm. It catalyses the reaction Hydrolysis of proteins in presence of ATP.. ATP-dependent serine protease that mediates the selective degradation of mutant and abnormal proteins as well as certain short-lived regulatory proteins. Required for cellular homeostasis and for survival from DNA damage and developmental changes induced by stress. Degrades polypeptides processively to yield small peptide fragments that are 5 to 10 amino acids long. Binds to DNA in a double-stranded, site-specific manner. In Thermus thermophilus (strain ATCC BAA-163 / DSM 7039 / HB27), this protein is Lon protease 1.